The sequence spans 134 residues: Ribosome-binding factor A (134 aa).

The protein belongs to the RbfA family. As to quaternary structure, monomer. Binds 30S ribosomal subunits, but not 50S ribosomal subunits or 70S ribosomes.

It localises to the cytoplasm. Functionally, one of several proteins that assist in the late maturation steps of the functional core of the 30S ribosomal subunit. Associates with free 30S ribosomal subunits (but not with 30S subunits that are part of 70S ribosomes or polysomes). Required for efficient processing of 16S rRNA. May interact with the 5'-terminal helix region of 16S rRNA. This Cyanothece sp. (strain PCC 7425 / ATCC 29141) protein is Ribosome-binding factor A.